The chain runs to 252 residues: Triosephosphate isomerase (252 aa).

10–12 contacts substrate; that stretch reads NWK. The active-site Electrophile is the histidine 96. Glutamate 168 functions as the Proton acceptor in the catalytic mechanism. Substrate is bound by residues glycine 174, serine 214, and 235-236; that span reads GG.

Belongs to the triosephosphate isomerase family. In terms of assembly, homodimer.

The protein localises to the cytoplasm. The catalysed reaction is D-glyceraldehyde 3-phosphate = dihydroxyacetone phosphate. The protein operates within carbohydrate biosynthesis; gluconeogenesis. Its pathway is carbohydrate degradation; glycolysis; D-glyceraldehyde 3-phosphate from glycerone phosphate: step 1/1. Functionally, involved in the gluconeogenesis. Catalyzes stereospecifically the conversion of dihydroxyacetone phosphate (DHAP) to D-glyceraldehyde-3-phosphate (G3P). The polypeptide is Triosephosphate isomerase (Streptococcus pneumoniae serotype 2 (strain D39 / NCTC 7466)).